The primary structure comprises 72 residues: Long neurotoxin 1 (72 aa).

Intrachain disulfides connect Cys-3/Cys-21, Cys-14/Cys-42, Cys-27/Cys-31, Cys-46/Cys-57, and Cys-58/Cys-63.

The protein belongs to the three-finger toxin family. Long-chain subfamily. Type II alpha-neurotoxin sub-subfamily. As to expression, expressed by the venom gland.

Its subcellular location is the secreted. In terms of biological role, binds with high affinity to muscular (alpha-1/CHRNA1) and neuronal (alpha-7/CHRNA7) nicotinic acetylcholine receptor (nAChR) and inhibits acetylcholine from binding to the receptor, thereby impairing neuromuscular and neuronal transmission. This chain is Long neurotoxin 1, found in Naja anchietae (Anchieta's cobra).